Here is a 457-residue protein sequence, read N- to C-terminus: Siroheme synthase (457 aa).

The interval 1 to 204 is precorrin-2 dehydrogenase /sirohydrochlorin ferrochelatase; that stretch reads MDHLPIFCQL…NDQKAITETT (204 aa). Residues 22-23 and 43-44 each bind NAD(+); these read DV and LA. Ser-128 carries the phosphoserine modification. Residues 216-457 form a uroporphyrinogen-III C-methyltransferase region; that stretch reads GEVVLVGAGP…RDKLNWFSNH (242 aa). Pro-225 contacts S-adenosyl-L-methionine. Asp-248 acts as the Proton acceptor in catalysis. The active-site Proton donor is the Lys-270. S-adenosyl-L-methionine contacts are provided by residues 301 to 303, Ile-306, 331 to 332, Met-382, and Gly-411; these read GGD and TA.

It in the N-terminal section; belongs to the precorrin-2 dehydrogenase / sirohydrochlorin ferrochelatase family. This sequence in the C-terminal section; belongs to the precorrin methyltransferase family.

The enzyme catalyses uroporphyrinogen III + 2 S-adenosyl-L-methionine = precorrin-2 + 2 S-adenosyl-L-homocysteine + H(+). It carries out the reaction precorrin-2 + NAD(+) = sirohydrochlorin + NADH + 2 H(+). It catalyses the reaction siroheme + 2 H(+) = sirohydrochlorin + Fe(2+). Its pathway is cofactor biosynthesis; adenosylcobalamin biosynthesis; precorrin-2 from uroporphyrinogen III: step 1/1. The protein operates within cofactor biosynthesis; adenosylcobalamin biosynthesis; sirohydrochlorin from precorrin-2: step 1/1. It participates in porphyrin-containing compound metabolism; siroheme biosynthesis; precorrin-2 from uroporphyrinogen III: step 1/1. It functions in the pathway porphyrin-containing compound metabolism; siroheme biosynthesis; siroheme from sirohydrochlorin: step 1/1. Its pathway is porphyrin-containing compound metabolism; siroheme biosynthesis; sirohydrochlorin from precorrin-2: step 1/1. Its function is as follows. Multifunctional enzyme that catalyzes the SAM-dependent methylations of uroporphyrinogen III at position C-2 and C-7 to form precorrin-2 via precorrin-1. Then it catalyzes the NAD-dependent ring dehydrogenation of precorrin-2 to yield sirohydrochlorin. Finally, it catalyzes the ferrochelation of sirohydrochlorin to yield siroheme. This is Siroheme synthase from Escherichia coli O8 (strain IAI1).